The following is a 318-amino-acid chain: Ankyrin repeat and SOCS box protein 7 (318 aa).

ANK repeat units follow at residues 13 to 42, 46 to 75, 80 to 109, 116 to 145, 149 to 178, 180 to 208, and 213 to 242; these read QEELQIQAAVAAGDVHTVRKMLEQGYSPNG, NGWTLLHFSAARGKERCVRVFLEHGADPTV, GGFTALHYAAMHGRARIARLMLESEYRSDI, DGWTPLHVAAHYGRDSFVRLLLEFKAEVDP, KGTTPLQLAIIRERSSCVKILLDHNANIDI, NGFLLRYAVIKSNHSYCRMFLQRGADTDL, and DGQTPLHLSALRDDVLCARMLYNYGADTNT. One can recognise an SOCS box domain in the interval 265–318; the sequence is LDFLQEVTRQPRNLQDLCRIKIRQCIGLQNLKLLDELPIAKVMKDYLKHKFDDI.

Belongs to the ankyrin SOCS box (ASB) family. In terms of assembly, interacts with CUL5. Interacts with RNF7. Interacts with PSRC1.

It functions in the pathway protein modification; protein ubiquitination. In terms of biological role, probable substrate-recognition component of a SCF-like ECS (Elongin-Cullin-SOCS-box protein) E3 ubiquitin-protein ligase complex which mediates the ubiquitination and subsequent proteasomal degradation of target proteins. Plays a role in spindle dynamics and genome integrity by targeting the mitotic progression protein PSRC1 for proteasomal degradation in a cell cycle-dependent manner. Also participates in meiosis by mediating the proper attachment between kinetochores and microtubules. This Macaca fascicularis (Crab-eating macaque) protein is Ankyrin repeat and SOCS box protein 7 (ASB7).